The following is a 172-amino-acid chain: Agamous-like MADS-box protein AGL29 (172 aa).

An MADS-box domain is found at 1 to 61 (MGRRKIKMEM…GKPFSYGKPN (61 aa)). Residues 86–123 (NYRPKLKRLSERLDLLNQEVEAEKERGEKSQEKLESAG) adopt a coiled-coil conformation. Residues 106–125 (EAEKERGEKSQEKLESAGDE) are disordered.

In terms of tissue distribution, expressed in pollen.

The protein resides in the nucleus. Functionally, probable transcription factor. In Arabidopsis thaliana (Mouse-ear cress), this protein is Agamous-like MADS-box protein AGL29.